Here is a 266-residue protein sequence, read N- to C-terminus: Protein YABBY 5 (266 aa).

The interval 1 to 22 (MMSSAPETFSLDHLSQHQQQQP) is disordered. The segment at 36–63 (CNFCDTILAVGVPCSSLFKTVTVRCGHC) adopts a C4-type zinc-finger fold. The span at 119–141 (ASPNVSSITSSNSSCANNAPATS) shows a compositional bias: low complexity. The disordered stretch occupies residues 119–174 (ASPNVSSITSSNSSCANNAPATSMASAANKATQREPQQPKNAPSANRTSEKRQRVP). A compositionally biased stretch (polar residues) spans 142–165 (MASAANKATQREPQQPKNAPSANR).

Belongs to the YABBY family.

The protein localises to the nucleus. May be involved in leaf cell growth and differentiation, rather than abaxial cell fate determination. This Oryza sativa subsp. indica (Rice) protein is Protein YABBY 5 (YAB5).